We begin with the raw amino-acid sequence, 91 residues long: UPF0250 protein PputGB1_4855 (91 aa).

The protein belongs to the UPF0250 family.

The sequence is that of UPF0250 protein PputGB1_4855 from Pseudomonas putida (strain GB-1).